Here is a 464-residue protein sequence, read N- to C-terminus: RYamide receptor (464 aa).

At 1 to 105 the chain is on the extracellular side; it reads MEHHNSHLLP…EDMWSSAYFK (105 aa). N-linked (GlcNAc...) asparagine glycans are attached at residues N49, N79, and N85. A helical transmembrane segment spans residues 106-126; that stretch reads IIVYMLYIPIFIFALIGNGTV. Residues 127–148 are Cytoplasmic-facing; sequence CYIVYSTPRMRTVTNYFIASLA. The chain crosses the membrane as a helical span at residues 149 to 169; that stretch reads IGDILMSFFCVPSSFISLFIL. Residues 170 to 189 are Extracellular-facing; it reads NYWPFGLALCHFVNYSQAVS. The N-linked (GlcNAc...) asparagine glycan is linked to N183. A helical membrane pass occupies residues 190–210; the sequence is VLVSAYTLVAISIDRYIAIMW. The Cytoplasmic portion of the chain corresponds to 211 to 221; it reads PLKPRITKRYA. The chain crosses the membrane as a helical span at residues 222–242; sequence TFIIAGVWFIALATALPIPIV. The Extracellular segment spans residues 243–274; sequence SGLDIPMSPWHTKCEKYICREMWPSRTQEYYY. Residues 275–295 traverse the membrane as a helical segment; that stretch reads TLSLFALQFVVPLGVLIFTYA. At 296–329 the chain is on the cytoplasmic side; the sequence is RITIRVWAKRPPGEAETNRDQRMARSKRKMVKMM. The helical transmembrane segment at 330 to 350 threads the bilayer; it reads LTVVIVFTCCWLPFNILQLLL. The Extracellular segment spans residues 351–363; it reads NDEEFAHWDPLPY. A helical transmembrane segment spans residues 364–384; the sequence is VWFAFHWLAMSHCCYNPIIYC. Residues 385-464 lie on the Cytoplasmic side of the membrane; the sequence is YMNARFRSGF…LSCGETSPLR (80 aa).

Belongs to the G-protein coupled receptor 1 family.

Its subcellular location is the cell membrane. In terms of biological role, receptor for the neuropeptides RYamide-1 and RYamide-2. The activity of this receptor is mediated by G proteins which activate a phosphatidyl-inositol-calcium second messenger system. RYamide signaling may suppress feeding behavior. The sequence is that of RYamide receptor from Drosophila melanogaster (Fruit fly).